Here is a 530-residue protein sequence, read N- to C-terminus: Pentatricopeptide repeat-containing protein At5g56310 (530 aa).

10 PPR repeats span residues 77–114 (NTYL…CAKP), 115–149 (DTFT…GFDS), 150–180 (SVHV…MLVK), 181–211 (DVNV…MPCW), 214–248 (NEVS…NVEP), 249–283 (DEVT…GMNR), 284–314 (AVSL…VNER), 315–349 (NVVT…GVRP), 350–380 (NDVT…MRSK), and 386–420 (NIEH…ANAA). Residues 421–496 (IWGSLLAASN…MAGESSIEVE (76 aa)) are type E motif. The type E(+) motif stretch occupies residues 497-527 (NRVYKFISGDLTHPQVERIHEILQEMDLQIQ).

It belongs to the PPR family. PCMP-E subfamily.

This Arabidopsis thaliana (Mouse-ear cress) protein is Pentatricopeptide repeat-containing protein At5g56310 (PCMP-E13).